The following is a 174-amino-acid chain: Cytochrome c oxidase subunit 5A, mitochondrial (174 aa).

The N-terminal 29 residues, 1–29, are a transit peptide targeting the mitochondrion; that stretch reads MASLTRAVTRLAIAGRQAVRTIATTTPVS.

This sequence belongs to the cytochrome c oxidase subunit 5A family. Component of the cytochrome c oxidase (complex IV, CIV), a multisubunit enzyme composed of a catalytic core of 3 subunits and several supernumerary subunits. The complex exists as a monomer or a dimer and forms supercomplexes (SCs) in the inner mitochondrial membrane with ubiquinol-cytochrome c oxidoreductase (cytochrome b-c1 complex, complex III, CIII).

The protein resides in the mitochondrion inner membrane. It participates in energy metabolism; oxidative phosphorylation. Component of the cytochrome c oxidase, the last enzyme in the mitochondrial electron transport chain which drives oxidative phosphorylation. The respiratory chain contains 3 multisubunit complexes succinate dehydrogenase (complex II, CII), ubiquinol-cytochrome c oxidoreductase (cytochrome b-c1 complex, complex III, CIII) and cytochrome c oxidase (complex IV, CIV), that cooperate to transfer electrons derived from NADH and succinate to molecular oxygen, creating an electrochemical gradient over the inner membrane that drives transmembrane transport and the ATP synthase. Cytochrome c oxidase is the component of the respiratory chain that catalyzes the reduction of oxygen to water. Electrons originating from reduced cytochrome c in the intermembrane space (IMS) are transferred via the dinuclear copper A center (CU(A)) of subunit 2 and heme A of subunit 1 to the active site in subunit 1, a binuclear center (BNC) formed by heme A3 and copper B (CU(B)). The BNC reduces molecular oxygen to 2 water molecules using 4 electrons from cytochrome c in the IMS and 4 protons from the mitochondrial matrix. This chain is Cytochrome c oxidase subunit 5A, mitochondrial, found in Caenorhabditis elegans.